Reading from the N-terminus, the 90-residue chain is Acylphosphatase (90 aa).

The 86-residue stretch at 3–88 (TWHMTAHGRV…GKFEDFDLRP (86 aa)) folds into the Acylphosphatase-like domain. Residues Arg-18 and Asn-36 contribute to the active site.

Belongs to the acylphosphatase family.

The catalysed reaction is an acyl phosphate + H2O = a carboxylate + phosphate + H(+). The sequence is that of Acylphosphatase (acyP) from Cupriavidus pinatubonensis (strain JMP 134 / LMG 1197) (Cupriavidus necator (strain JMP 134)).